We begin with the raw amino-acid sequence, 147 residues long: Large ribosomal subunit protein uL13 (147 aa).

It belongs to the universal ribosomal protein uL13 family. Part of the 50S ribosomal subunit.

This protein is one of the early assembly proteins of the 50S ribosomal subunit, although it is not seen to bind rRNA by itself. It is important during the early stages of 50S assembly. In Limosilactobacillus fermentum (strain NBRC 3956 / LMG 18251) (Lactobacillus fermentum), this protein is Large ribosomal subunit protein uL13.